Consider the following 363-residue polypeptide: 3-dehydroquinate synthase (363 aa).

NAD(+) is bound by residues 109 to 113 (GASTD), 133 to 134 (TT), Lys-146, and Lys-155. 3 residues coordinate Zn(2+): Glu-188, His-251, and His-267.

It belongs to the sugar phosphate cyclases superfamily. Dehydroquinate synthase family. Requires NAD(+) as cofactor. It depends on Co(2+) as a cofactor. Zn(2+) is required as a cofactor.

It is found in the cytoplasm. The catalysed reaction is 7-phospho-2-dehydro-3-deoxy-D-arabino-heptonate = 3-dehydroquinate + phosphate. The protein operates within metabolic intermediate biosynthesis; chorismate biosynthesis; chorismate from D-erythrose 4-phosphate and phosphoenolpyruvate: step 2/7. Its function is as follows. Catalyzes the conversion of 3-deoxy-D-arabino-heptulosonate 7-phosphate (DAHP) to dehydroquinate (DHQ). The sequence is that of 3-dehydroquinate synthase from Streptomyces coelicolor (strain ATCC BAA-471 / A3(2) / M145).